A 457-amino-acid chain; its full sequence is tRNA-2-methylthio-N(6)-dimethylallyladenosine synthase (457 aa).

Positions 3–120 constitute an MTTase N-terminal domain; that stretch reads KKVYVKTFGC…LPQMIDQRRA (118 aa). Residues cysteine 12, cysteine 49, cysteine 83, cysteine 157, cysteine 161, and cysteine 164 each contribute to the [4Fe-4S] cluster site. Residues 143-377 form the Radical SAM core domain; it reads RVEGPSAFVS…QATIEENVAR (235 aa). The TRAM domain occupies 380 to 447; that stretch reads RSMVGKVERI…PHSLRGELLL (68 aa).

It belongs to the methylthiotransferase family. MiaB subfamily. Monomer. The cofactor is [4Fe-4S] cluster.

It is found in the cytoplasm. The enzyme catalyses N(6)-dimethylallyladenosine(37) in tRNA + (sulfur carrier)-SH + AH2 + 2 S-adenosyl-L-methionine = 2-methylsulfanyl-N(6)-dimethylallyladenosine(37) in tRNA + (sulfur carrier)-H + 5'-deoxyadenosine + L-methionine + A + S-adenosyl-L-homocysteine + 2 H(+). Its function is as follows. Catalyzes the methylthiolation of N6-(dimethylallyl)adenosine (i(6)A), leading to the formation of 2-methylthio-N6-(dimethylallyl)adenosine (ms(2)i(6)A) at position 37 in tRNAs that read codons beginning with uridine. This chain is tRNA-2-methylthio-N(6)-dimethylallyladenosine synthase, found in Burkholderia ambifaria (strain ATCC BAA-244 / DSM 16087 / CCUG 44356 / LMG 19182 / AMMD) (Burkholderia cepacia (strain AMMD)).